A 280-amino-acid chain; its full sequence is MKKLYGVIGNPIGHSMSPDIHNASLKDLGLDGHYHAFKVEENDLEDAVKGIRALGVQGINVTVPHKVSIMDYLDHIDESAKVLGAVNTVRREGDKLVGYNTDGEGFVKSLMKVLDKPISELSFLMIGAGGAARAIFTTIVRNTPKKFDICNRTLEKAKRLTEATPSFHNKEVLSIKEAEERLEQYDVIIHTTSVGMYPNVDDVPLSLQRAASSAVVCDIVYNPIQTALLKEASQKGLKTLDGVGMFVEQAALSFQLWTGQEPNIEKMRSIVIGKLGGTEC.

Residues 15–17 (SMS) and threonine 62 each bind shikimate. Lysine 66 serves as the catalytic Proton acceptor. Glutamate 78 contacts NADP(+). Shikimate contacts are provided by asparagine 87 and aspartate 102. Residues 127–131 (GAGGA), 151–156 (NRTLEK), and isoleucine 219 contribute to the NADP(+) site. Tyrosine 221 provides a ligand contact to shikimate. Glycine 242 is a binding site for NADP(+).

The protein belongs to the shikimate dehydrogenase family. Homodimer.

It carries out the reaction shikimate + NADP(+) = 3-dehydroshikimate + NADPH + H(+). It functions in the pathway metabolic intermediate biosynthesis; chorismate biosynthesis; chorismate from D-erythrose 4-phosphate and phosphoenolpyruvate: step 4/7. Its function is as follows. Involved in the biosynthesis of the chorismate, which leads to the biosynthesis of aromatic amino acids. Catalyzes the reversible NADPH linked reduction of 3-dehydroshikimate (DHSA) to yield shikimate (SA). This Bacillus subtilis (strain 168) protein is Shikimate dehydrogenase (NADP(+)).